Here is a 58-residue protein sequence, read N- to C-terminus: Large ribosomal subunit protein bL32 (58 aa).

It belongs to the bacterial ribosomal protein bL32 family.

This is Large ribosomal subunit protein bL32 from Synechococcus sp. (strain WH7803).